Reading from the N-terminus, the 63-residue chain is Large ribosomal subunit protein uL30 (63 aa).

The protein belongs to the universal ribosomal protein uL30 family. In terms of assembly, part of the 50S ribosomal subunit.

This Xanthomonas campestris pv. campestris (strain 8004) protein is Large ribosomal subunit protein uL30.